The chain runs to 202 residues: LexA repressor (202 aa).

The segment at residues 28 to 48 is a DNA-binding region (H-T-H motif); it reads RAEIAQRLGFRSPNAAEEHLK. Residues Ser-119 and Lys-156 each act as for autocatalytic cleavage activity in the active site.

This sequence belongs to the peptidase S24 family. As to quaternary structure, homodimer.

It carries out the reaction Hydrolysis of Ala-|-Gly bond in repressor LexA.. In terms of biological role, represses a number of genes involved in the response to DNA damage (SOS response), including recA and lexA. Binds to the 16 bp palindromic sequence 5'-CTGTATATATATACAG-3'. In the presence of single-stranded DNA, RecA interacts with LexA causing an autocatalytic cleavage which disrupts the DNA-binding part of LexA, leading to derepression of the SOS regulon and eventually DNA repair. The chain is LexA repressor from Salmonella agona (strain SL483).